The sequence spans 84 residues: Xenoxin-1 (84 aa).

The first 18 residues, 1–18 (MRYAIVFFLVCVITLGEA), serve as a signal peptide directing secretion. Disulfide bonds link Cys21/Cys42, Cys35/Cys55, Cys61/Cys76, and Cys77/Cys82.

Expressed by the skin dorsal glands.

The protein localises to the secreted. Lacks alpha-neurotoxic activity, has apparently no antibacterial activity, nor anti-coagulant potency. This chain is Xenoxin-1 (xenoxin-1), found in Xenopus laevis (African clawed frog).